Here is a 1272-residue protein sequence, read N- to C-terminus: Magnesium-chelatase subunit H (1272 aa).

It belongs to the Mg-chelatase subunit H family.

The enzyme catalyses protoporphyrin IX + Mg(2+) + ATP + H2O = Mg-protoporphyrin IX + ADP + phosphate + 3 H(+). Its pathway is porphyrin-containing compound metabolism; bacteriochlorophyll biosynthesis (light-independent). In terms of biological role, involved in bacteriochlorophyll pigment biosynthesis; introduces a magnesium ion into protoporphyrin IX to yield Mg-protoroporphyrin IX. This Chlorobaculum parvum (strain DSM 263 / NCIMB 8327) (Chlorobium vibrioforme subsp. thiosulfatophilum) protein is Magnesium-chelatase subunit H (bchH).